A 383-amino-acid polypeptide reads, in one-letter code: MLQPQFRPLLAGTASFAQTVLGRTVARCYATKAATQSASSTSTSNTSKDAKAKIVTPYVRDAGMMRTYKPHTPGIRHLKRPINDHLWKGRPYLPLTFPKKGQSKGGRNHSGRVTVRHRGGGHKRRIRMVDFERWIPGPHTVLRIEYDPGRSAHIALVKEEATGRKSYIVAADGMRAGDVVQSYRSGLPQDLLDSMGGVVDPGILAARTCWRGNCLPVSMIPVGTQIYCVGSRPDGKAVFCRSAGTYATIISKEEETREDGTKVMTGKFVNVRLQSGEIRRVSKDACATVGIASNIMHHYRQLGKAGRSRWLNIRPTVRGLAMNANDHPHGGGRGKSKGNRHPVSPWGTPAKGGYKTRRKSNVNKWVVTPRVRNMGVRRNKKTT.

Disordered stretches follow at residues 97–122 and 322–357; these read FPKK…GGGH and MNAN…YKTR. 2 stretches are compositionally biased toward basic residues: residues 106 to 122 and 330 to 340; these read GRNH…GGGH and GGGRGKSKGNR.

Belongs to the universal ribosomal protein uL2 family. In terms of assembly, component of the mitochondrial large ribosomal subunit (mt-LSU). Mature N.crassa 74S mitochondrial ribosomes consist of a small (37S) and a large (54S) subunit. The 37S small subunit contains a 16S ribosomal RNA (16S mt-rRNA) and 32 different proteins. The 54S large subunit contains a 23S rRNA (23S mt-rRNA) and 42 different proteins.

The protein resides in the mitochondrion. In terms of biological role, component of the mitochondrial ribosome (mitoribosome), a dedicated translation machinery responsible for the synthesis of mitochondrial genome-encoded proteins, including at least some of the essential transmembrane subunits of the mitochondrial respiratory chain. The mitoribosomes are attached to the mitochondrial inner membrane and translation products are cotranslationally integrated into the membrane. The protein is Large ribosomal subunit protein uL2m (rml2) of Neurospora crassa (strain ATCC 24698 / 74-OR23-1A / CBS 708.71 / DSM 1257 / FGSC 987).